Consider the following 409-residue polypeptide: uncharacterized protein (409 aa).

The next 10 membrane-spanning stretches (helical) occupy residues 53–73 (IITLVGLLCNIGMYLIMYVHC), 83–103 (WCYFAVAFLIFAYQTLDNVDG), 115–135 (LGELFDHVCDALSVAMFAIVM), 141–161 (IGPYWTFFSFIVGMWPFYLAH), 183–203 (VLFMIIEIITGIFGSDIWTYG), 205–225 (STTVGKIATVFVSIGAVVTCL), 243–263 (CLLQLTPICLFTALIVIWASV), 265–285 (NLITEQPHLFIMTLGILFGYI), 299–319 (CSLFYPIFVPIIIVVLNSILA), and 329–349 (TVALWILFSIACAQFLLFSYF). The span at 388 to 401 (EEGSSSIGNSTDDI) shows a compositional bias: polar residues. The interval 388 to 409 (EEGSSSIGNSTDDINPSEIEEI) is disordered.

Belongs to the CDP-alcohol phosphatidyltransferase class-I family.

The protein localises to the membrane. This is an uncharacterized protein from Dictyostelium discoideum (Social amoeba).